A 397-amino-acid chain; its full sequence is Acetate kinase (397 aa).

Mg(2+) is bound at residue Asn7. Position 14 (Lys14) interacts with ATP. Substrate is bound at residue Arg91. The active-site Proton donor/acceptor is the Asp148. ATP-binding positions include 208-212, 283-285, and 331-335; these read HLGNG, DFR, and GLGEN. Glu383 contacts Mg(2+).

It belongs to the acetokinase family. Homodimer. Mg(2+) is required as a cofactor. The cofactor is Mn(2+).

Its subcellular location is the cytoplasm. The enzyme catalyses acetate + ATP = acetyl phosphate + ADP. Its pathway is metabolic intermediate biosynthesis; acetyl-CoA biosynthesis; acetyl-CoA from acetate: step 1/2. Catalyzes the formation of acetyl phosphate from acetate and ATP. Can also catalyze the reverse reaction. In Heliobacterium modesticaldum (strain ATCC 51547 / Ice1), this protein is Acetate kinase.